Here is a 337-residue protein sequence, read N- to C-terminus: Serpentine receptor class beta-6 (337 aa).

7 consecutive transmembrane segments (helical) span residues 20–40 (QFYT…LIIF), 62–82 (ILIS…IPFL), 98–118 (IFQN…LGIT), 138–158 (IGVF…YFFF), 183–203 (WLCY…YFLV), 234–254 (TFIS…TLII), and 273–293 (GVYI…CVIL).

It belongs to the nematode receptor-like protein srb family. As to expression, expressed in the ADL, ADF and ASH chemosensory neurons in the head and in the PHA and PHB chemosensory neurons in the tail. Low expression also observed in the egg-laying structures in the mid-body region.

The protein localises to the cell membrane. In terms of biological role, mediates recognition and avoidance of Streptomyces species by detecting dodecanoic acid secreted by the bacteria. Also mediates avoidance of decanoic acid which is not secreted by Streptomyces species but this may represent an additional important avoidance response in the environment. This is Serpentine receptor class beta-6 (srb-6) from Caenorhabditis elegans.